We begin with the raw amino-acid sequence, 343 residues long: tRNA N6-adenosine threonylcarbamoyltransferase (343 aa).

Fe cation contacts are provided by His115 and His119. Substrate-binding positions include 137 to 141, Asp170, Gly183, Asp187, and Asn276; that span reads LVSGG. Asp306 is a binding site for Fe cation.

This sequence belongs to the KAE1 / TsaD family. Fe(2+) serves as cofactor.

The protein resides in the cytoplasm. The enzyme catalyses L-threonylcarbamoyladenylate + adenosine(37) in tRNA = N(6)-L-threonylcarbamoyladenosine(37) in tRNA + AMP + H(+). Functionally, required for the formation of a threonylcarbamoyl group on adenosine at position 37 (t(6)A37) in tRNAs that read codons beginning with adenine. Is involved in the transfer of the threonylcarbamoyl moiety of threonylcarbamoyl-AMP (TC-AMP) to the N6 group of A37, together with TsaE and TsaB. TsaD likely plays a direct catalytic role in this reaction. This chain is tRNA N6-adenosine threonylcarbamoyltransferase, found in Limosilactobacillus reuteri (strain DSM 20016) (Lactobacillus reuteri).